Consider the following 3184-residue polypeptide: Cilia and flagella-associated protein 47 (3184 aa).

Residues 1729-1851 enclose the Calponin-homology (CH) domain; the sequence is SDSERILLSW…LCVYLYERLP (123 aa). A disordered region spans residues 2491–2514; it reads RDEEESQEETDTEKDFSSQETPSD. Residues 2493 to 2502 show a composition bias toward acidic residues; the sequence is EEESQEETDT.

As to quaternary structure, interacts with CFAP65. As to expression, highly expressed in spermatzoa (at protein level).

The protein localises to the cytoplasm. It localises to the cytoskeleton. Its subcellular location is the flagellum basal body. Functionally, plays a role in flagellar formation and sperm motility. The chain is Cilia and flagella-associated protein 47 from Mus musculus (Mouse).